We begin with the raw amino-acid sequence, 911 residues long: Isoleucine--tRNA ligase (911 aa).

The 'HIGH' region motif lies at 57–67; that stretch reads PYANGHIHIGH. Glutamate 564 serves as a coordination point for L-isoleucyl-5'-AMP. The 'KMSKS' region motif lies at 605–609; sequence KMSKS. Lysine 608 contributes to the ATP binding site. Residues cysteine 887, cysteine 890, cysteine 902, and cysteine 905 each contribute to the Zn(2+) site.

The protein belongs to the class-I aminoacyl-tRNA synthetase family. IleS type 1 subfamily. Monomer. Requires Zn(2+) as cofactor.

It is found in the cytoplasm. It catalyses the reaction tRNA(Ile) + L-isoleucine + ATP = L-isoleucyl-tRNA(Ile) + AMP + diphosphate. In terms of biological role, catalyzes the attachment of isoleucine to tRNA(Ile). As IleRS can inadvertently accommodate and process structurally similar amino acids such as valine, to avoid such errors it has two additional distinct tRNA(Ile)-dependent editing activities. One activity is designated as 'pretransfer' editing and involves the hydrolysis of activated Val-AMP. The other activity is designated 'posttransfer' editing and involves deacylation of mischarged Val-tRNA(Ile). In Nautilia profundicola (strain ATCC BAA-1463 / DSM 18972 / AmH), this protein is Isoleucine--tRNA ligase.